The chain runs to 131 residues: Small ribosomal subunit protein bS6 (131 aa).

Positions 97-131 (TEASPMAKARDERDSRRGPAGERSYDEAHAEEIAE) are disordered. Residues 104-131 (KARDERDSRRGPAGERSYDEAHAEEIAE) show a composition bias toward basic and acidic residues.

This sequence belongs to the bacterial ribosomal protein bS6 family.

Functionally, binds together with bS18 to 16S ribosomal RNA. The polypeptide is Small ribosomal subunit protein bS6 (Shewanella baltica (strain OS223)).